Reading from the N-terminus, the 175-residue chain is Ribosome maturation factor RimM (175 aa).

In terms of domain architecture, PRC barrel spans 99-172 (EGEFHLLDLV…WLRLTPPPGL (74 aa)).

The protein belongs to the RimM family. As to quaternary structure, binds ribosomal protein uS19.

It localises to the cytoplasm. In terms of biological role, an accessory protein needed during the final step in the assembly of 30S ribosomal subunit, possibly for assembly of the head region. Essential for efficient processing of 16S rRNA. May be needed both before and after RbfA during the maturation of 16S rRNA. It has affinity for free ribosomal 30S subunits but not for 70S ribosomes. This is Ribosome maturation factor RimM from Synechococcus sp. (strain WH7803).